Consider the following 538-residue polypeptide: Anti-bacteriophage protein A (538 aa).

In terms of assembly, interacts with AbpB.

Functionally, part of an antiviral system composed of AbpA and AbpB; when both are expressed from a plasmid they confer resistance to phages T2, T4, T7 and lambda but not RB32 or RB69. Resistance is temperature dependent, it can be seen at 30 degrees Celsius but not at 37 or 42 degrees Celsius. The system impairs phage but not bacterial DNA synthesis (shown for T4, T7 and lambda). Partially suppressed by mutations in T4 gene 41, a replicative helicase. The protein is Anti-bacteriophage protein A of Escherichia coli (strain K12).